The chain runs to 654 residues: RNA polymerase I-specific transcription initiation factor tif-1A (654 aa).

Positions 1–37 are disordered; sequence MKRSTANAPKLSPKHESESDPKKVKLEEEAKPTVNQA. Over residues 13-31 the composition is skewed to basic and acidic residues; the sequence is PKHESESDPKKVKLEEEAK.

This sequence belongs to the RRN3 family.

Its subcellular location is the nucleus. The protein resides in the nucleolus. In terms of biological role, required for efficient transcription initiation by RNA polymerase I (Pol I). The sequence is that of RNA polymerase I-specific transcription initiation factor tif-1A from Caenorhabditis elegans.